Here is a 253-residue protein sequence, read N- to C-terminus: Phosphate import ATP-binding protein PstB (253 aa).

In terms of domain architecture, ABC transporter spans 8 to 248 (IQVRDLDLFY…PRDKRTEDYI (241 aa)). ATP is bound at residue 40–47 (GPSGCGKS).

This sequence belongs to the ABC transporter superfamily. Phosphate importer (TC 3.A.1.7) family. As to quaternary structure, the complex is composed of two ATP-binding proteins (PstB), two transmembrane proteins (PstC and PstA) and a solute-binding protein (PstS).

Its subcellular location is the cell membrane. The catalysed reaction is phosphate(out) + ATP + H2O = ADP + 2 phosphate(in) + H(+). Part of the ABC transporter complex PstSACB involved in phosphate import. Responsible for energy coupling to the transport system. The protein is Phosphate import ATP-binding protein PstB of Clostridium perfringens (strain ATCC 13124 / DSM 756 / JCM 1290 / NCIMB 6125 / NCTC 8237 / Type A).